A 679-amino-acid polypeptide reads, in one-letter code: MADKPNTMTVEQAADEAAALRQTLNEWRRQYYDEDAPNVEDSVYDQKYERLVELEQTFPQLVTPDSPTQLVGGTVKAGFDKVTHEIPMLSLGDVFSQAELQEFVDRLEQNVGHPVDYNCELKIDGLALSLRYEDGVLVQGSTRGNGTVGEDITANIKTIKSIPQRLTRPLTIDVRGECYMPKAAFAALNERREAAGEPVFANPRNAAAGTLRQLDSRVVAERQLSTFMYNIADYEPLTARTQSDMLTEFADLGFAINPDFKVAHSMADVFSYIDHYQNERPELAYGIDGIVIKANPLPLQRSLGATVKVPRWAIAFKFPPDEQPTLLKDVEWTVGRTGVVTPTAVMEPVQLAGTTVARASLHNPDYVAAKDVRIGDTVLLHKAGDIIPEISSVDLAKRPKDAQPLVIPTTCPSCGAPLVHLEDEVALRCINPKCPAQVQEGLVHFASRNAMNIDGLGPRIIAQLYANRLVSDVAGLYRLTKAQLLTLDKIKDKSAEKLLTAIDRSRDNSLERLLFGLGIRHVGAKVARLIAQHFGTIEALMAASQEEIAAIDSMGDVIANAVVQYFESDEVHTLIRELQAVNVNTTYQGPSATVAEDSNSWFAGKRVVLTGKLESFTRPDATQWLQAHGATVMGSVSKKTDLVIAGSDAGSKLQKAQQLDITVWDEARFSETMREDAQA.

Residues 41-45 (DSVYD), 90-91 (SL), and Glu120 contribute to the NAD(+) site. Lys122 serves as the catalytic N6-AMP-lysine intermediate. Arg143, Glu177, Lys293, and Lys317 together coordinate NAD(+). Positions 411, 414, 429, and 434 each coordinate Zn(2+). Residues 597–679 (DSNSWFAGKR…SETMREDAQA (83 aa)) enclose the BRCT domain.

The protein belongs to the NAD-dependent DNA ligase family. LigA subfamily. It depends on Mg(2+) as a cofactor. The cofactor is Mn(2+).

It catalyses the reaction NAD(+) + (deoxyribonucleotide)n-3'-hydroxyl + 5'-phospho-(deoxyribonucleotide)m = (deoxyribonucleotide)n+m + AMP + beta-nicotinamide D-nucleotide.. DNA ligase that catalyzes the formation of phosphodiester linkages between 5'-phosphoryl and 3'-hydroxyl groups in double-stranded DNA using NAD as a coenzyme and as the energy source for the reaction. It is essential for DNA replication and repair of damaged DNA. This is DNA ligase from Lactiplantibacillus plantarum (strain ATCC BAA-793 / NCIMB 8826 / WCFS1) (Lactobacillus plantarum).